A 136-amino-acid polypeptide reads, in one-letter code: Histone H3.3 type 2 (136 aa).

Positions 1 to 43 (MARTKQTARKSTGGKAPRKQLATKAARKSAPTTGGVKKPHRYR) are disordered. Residues Lys5 and Lys10 each carry the N6,N6,N6-trimethyllysine; alternate modification. N6,N6-dimethyllysine; alternate occurs at positions 5 and 10. N6-acetyllysine; alternate is present on residues Lys5 and Lys10. Lys5 carries the N6-methyllysine; alternate modification. Ser11 bears the Phosphoserine mark. Residues Lys15 and Lys24 each carry the N6-acetyllysine modification. N6,N6,N6-trimethyllysine; alternate is present on Lys28. At Lys28 the chain carries N6,N6-dimethyllysine; alternate. The residue at position 28 (Lys28) is an N6-methyllysine; alternate. Ser29 bears the Phosphoserine mark. Lys37 carries the post-translational modification N6,N6,N6-trimethyllysine; alternate. Lys37 carries the post-translational modification N6-methyllysine; alternate. N6-methyllysine is present on Lys80.

This sequence belongs to the histone H3 family. The nucleosome is a histone octamer containing two molecules each of H2A, H2B, H3 and H4 assembled in one H3-H4 heterotetramer and two H2A-H2B heterodimers. The octamer wraps approximately 147 bp of DNA. Post-translationally, acetylation is generally linked to gene activation. In terms of processing, methylation at Lys-5 is linked to gene activation. Methylation at Lys-10 is linked to gene repression. In terms of tissue distribution, highly expressed in nearly all larval and adult nuclei. Expressed only at low levels in intestine. Expressed throughout all stages of gametogenesis.

It is found in the nucleus. Its subcellular location is the chromosome. Functionally, variant histone H3 which replaces conventional H3 in a wide range of nucleosomes in active genes. Constitutes the predominant form of histone H3 in non-dividing cells and is incorporated into chromatin independently of DNA synthesis. Deposited at sites of nucleosomal displacement throughout transcribed genes, suggesting that it represents an epigenetic imprint of transcriptionally active chromatin. Nucleosomes wrap and compact DNA into chromatin, limiting DNA accessibility to the cellular machineries which require DNA as a template. Histones thereby play a central role in transcription regulation, DNA repair, DNA replication and chromosomal stability. DNA accessibility is regulated via a complex set of post-translational modifications of histones, also called histone code, and nucleosome remodeling. This chain is Histone H3.3 type 2 (his-72), found in Caenorhabditis elegans.